A 492-amino-acid polypeptide reads, in one-letter code: NADH-ubiquinone oxidoreductase chain 4 (492 aa).

15 helical membrane passes run 9–29, 36–56, 63–83, 86–106, 115–135, 136–156, 170–190, 211–231, 242–262, 269–289, 304–324, 332–352, 370–390, 410–430, and 454–474; these read LILT…IPSA, NFAL…WIQF, FQFS…TIGI, ISLF…LVSW, DYLI…SVLD, LLLF…IVGV, FFLY…NIYF, IFLW…IPFH, PTAG…YGFL, FPVA…VAII, IIAY…FSLN, ILLM…IGVL, VMPL…GFPG, TLTL…IWLF, and FWIL…PNSF.

It belongs to the complex I subunit 4 family.

It localises to the mitochondrion membrane. It catalyses the reaction a ubiquinone + NADH + 5 H(+)(in) = a ubiquinol + NAD(+) + 4 H(+)(out). Its function is as follows. Core subunit of the mitochondrial membrane respiratory chain NADH dehydrogenase (Complex I) that is believed to belong to the minimal assembly required for catalysis. Complex I functions in the transfer of electrons from NADH to the respiratory chain. The immediate electron acceptor for the enzyme is believed to be ubiquinone. In Chondrus crispus (Carrageen Irish moss), this protein is NADH-ubiquinone oxidoreductase chain 4 (ND4).